We begin with the raw amino-acid sequence, 399 residues long: Dual-specificity RNA methyltransferase RlmN (399 aa).

The Proton acceptor role is filled by Glu-116. The region spanning 122 to 352 (SEDRLTLCIS…VLLRRSMGRD (231 aa)) is the Radical SAM core domain. A disulfide bridge links Cys-129 with Cys-357. Residues Cys-136, Cys-140, and Cys-143 each coordinate [4Fe-4S] cluster. Residues 185–186 (GE), Ser-217, 238–240 (SLN), and Asn-314 contribute to the S-adenosyl-L-methionine site. Cys-357 functions as the S-methylcysteine intermediate in the catalytic mechanism.

It belongs to the radical SAM superfamily. RlmN family. [4Fe-4S] cluster serves as cofactor.

The protein resides in the cytoplasm. It carries out the reaction adenosine(2503) in 23S rRNA + 2 reduced [2Fe-2S]-[ferredoxin] + 2 S-adenosyl-L-methionine = 2-methyladenosine(2503) in 23S rRNA + 5'-deoxyadenosine + L-methionine + 2 oxidized [2Fe-2S]-[ferredoxin] + S-adenosyl-L-homocysteine. The catalysed reaction is adenosine(37) in tRNA + 2 reduced [2Fe-2S]-[ferredoxin] + 2 S-adenosyl-L-methionine = 2-methyladenosine(37) in tRNA + 5'-deoxyadenosine + L-methionine + 2 oxidized [2Fe-2S]-[ferredoxin] + S-adenosyl-L-homocysteine. Specifically methylates position 2 of adenine 2503 in 23S rRNA and position 2 of adenine 37 in tRNAs. m2A2503 modification seems to play a crucial role in the proofreading step occurring at the peptidyl transferase center and thus would serve to optimize ribosomal fidelity. In Bdellovibrio bacteriovorus (strain ATCC 15356 / DSM 50701 / NCIMB 9529 / HD100), this protein is Dual-specificity RNA methyltransferase RlmN.